A 383-amino-acid chain; its full sequence is Aliphatic nitrilase (383 aa).

A CN hydrolase domain is found at 13 to 288 (VKVATVQAEP…EGLLYAELDL (276 aa)). Glutamate 53 (proton acceptor) is an active-site residue. The active-site Proton donor is lysine 136. Cysteine 170 functions as the Nucleophile in the catalytic mechanism. The interval 359–383 (ATLPLDAPAPAPAPEQKSGRAKAEA) is disordered.

It belongs to the carbon-nitrogen hydrolase superfamily. Nitrilase family.

The enzyme catalyses an aliphatic nitrile + 2 H2O = a carboxylate + NH4(+). Acts on aliphatic nitriles such as acrylonitrile, crotononitrile and glutaronitrile. This chain is Aliphatic nitrilase, found in Rhodococcus rhodochrous.